We begin with the raw amino-acid sequence, 412 residues long: Major facilitator superfamily domain-containing protein 3 (412 aa).

The next 12 membrane-spanning stretches (helical) occupy residues 10 to 30 (GLYL…PVLL), 40 to 60 (VGLA…APLV), 73 to 93 (STAG…PGAG), 94 to 114 (QAGL…GAAM), 138 to 158 (VQVV…LALL), 166 to 186 (LFLL…AAPA), 209 to 229 (VLAV…KLGE), 250 to 270 (LGLW…SLGG), 291 to 311 (LGGL…GASM), 321 to 341 (ALLS…VTFT), 361 to 381 (LLAT…GGLA), and 384 to 404 (LGPH…VLYL).

This sequence belongs to the major facilitator superfamily.

It localises to the membrane. This chain is Major facilitator superfamily domain-containing protein 3 (MFSD3), found in Homo sapiens (Human).